Here is a 675-residue protein sequence, read N- to C-terminus: uncharacterized protein (675 aa).

This is an uncharacterized protein from Homo sapiens (Human).